A 1380-amino-acid chain; its full sequence is DNA-directed RNA polymerase subunit beta (1380 aa).

It belongs to the RNA polymerase beta chain family. As to quaternary structure, the RNAP catalytic core consists of 2 alpha, 1 beta, 1 beta' and 1 omega subunit. When a sigma factor is associated with the core the holoenzyme is formed, which can initiate transcription.

The catalysed reaction is RNA(n) + a ribonucleoside 5'-triphosphate = RNA(n+1) + diphosphate. Functionally, DNA-dependent RNA polymerase catalyzes the transcription of DNA into RNA using the four ribonucleoside triphosphates as substrates. This is DNA-directed RNA polymerase subunit beta from Nitrobacter hamburgensis (strain DSM 10229 / NCIMB 13809 / X14).